We begin with the raw amino-acid sequence, 73 residues long: Protein SlyX homolog (73 aa).

Residues 54 to 73 (LQQAESNAPAAPANERPPHY) are disordered. Low complexity predominate over residues 57 to 67 (AESNAPAAPAN).

The protein belongs to the SlyX family.

The polypeptide is Protein SlyX homolog (Rhodopseudomonas palustris (strain BisA53)).